A 108-amino-acid chain; its full sequence is Pyrimidine/purine nucleoside phosphorylase (108 aa).

The protein belongs to the nucleoside phosphorylase PpnP family.

The enzyme catalyses a purine D-ribonucleoside + phosphate = a purine nucleobase + alpha-D-ribose 1-phosphate. The catalysed reaction is adenosine + phosphate = alpha-D-ribose 1-phosphate + adenine. It carries out the reaction cytidine + phosphate = cytosine + alpha-D-ribose 1-phosphate. It catalyses the reaction guanosine + phosphate = alpha-D-ribose 1-phosphate + guanine. The enzyme catalyses inosine + phosphate = alpha-D-ribose 1-phosphate + hypoxanthine. The catalysed reaction is thymidine + phosphate = 2-deoxy-alpha-D-ribose 1-phosphate + thymine. It carries out the reaction uridine + phosphate = alpha-D-ribose 1-phosphate + uracil. It catalyses the reaction xanthosine + phosphate = alpha-D-ribose 1-phosphate + xanthine. Its function is as follows. Catalyzes the phosphorolysis of diverse nucleosides, yielding D-ribose 1-phosphate and the respective free bases. Can use uridine, adenosine, guanosine, cytidine, thymidine, inosine and xanthosine as substrates. Also catalyzes the reverse reactions. The chain is Pyrimidine/purine nucleoside phosphorylase from Polaromonas naphthalenivorans (strain CJ2).